Consider the following 307-residue polypeptide: MESEDNPLRIQTGSLCSFQRPTPLVLIHDSSGTTFSYFRLGSLNRDVWAIHDPHFDKSTPWKGGFGEIAEHYIKLIETAGIRGSILLGGWSLGGYLALTIAHKLTAITNPTFSVTGILLVDSPYHTPMSKLPPHAPDPNFQHLPELVRKSFENYDVLLDRWELPPWTAPALEGKTIRCSAGGKTFTVANGRILYKPLGKGWEDVKMQSFEHGTSTLERYIELPPAALIRCAQAIPTDTDSKMPCFVDRFRHETLLGWDSNFPSFIKAAVDTNTHHFNIFESQNLKRLTIQLNECLEVLDSCCPMGYC.

This sequence belongs to the AMT4 thioesterase family.

It functions in the pathway secondary metabolite biosynthesis. Its function is as follows. Probable thioesterase; part of the gene cluster that mediates the biosynthesis of KK-1, a novel cyclic depsipeptide with 10 residues which is a promising active compound with high activity against many plant pathogens, especially Botrytis cinerea. Within the pathway, kk1J is not essential for the biosynthesis of KK-1, but plays a role for efficient production via correction of peptide chain synthesis by kk1B. The nonribosomal peptide synthetase (NRPS) kk1B catalyzes the elongation and cyclization of the decapeptide chain composed of 1 D-lactic acid residue (D-Lac), 1 pipecolic acid residue (Pip), 1 aspartic acid residue (Asp), 1 isoleucine residue (Ile), 1 glycine residue (Gly), 1 tyrosine residue (Tyr) and 4 valine residues (Val). The Asp, Ile and 3 Val residues are N-methylated by the 5 methyltransferase domains from the NRPS (found in modules 3, 5, 6, 7 and 9), whereas the Tyr residue is O-methylated by the cluster encoded O-methyltransferase kk1A. The thioesterase kk1J is likely to be involved in the corrective mechanism of peptide chain synthesis. The D-lactate dehydrogenase kk1H is involved in the synthesis of D-lactic acid from pyruvic acid, which is recognized by the A domain of the first kk1B module. The pyrroline-5-carboxylate reductase kk1I is involved in the synthesis of the L-pipecolic acid residue of KK-1 from delta-1-pyrroline-5-carboxylate (P5C), a metabolic intermediate of lysine. It still is unclear how kk1C and kk1D are involved in the production of KK-1. The chain is Probable thioesterase KK1J from Curvularia clavata.